A 498-amino-acid polypeptide reads, in one-letter code: ATP synthase subunit beta, chloroplastic (498 aa).

Position 172–179 (172–179 (GGAGVGKT)) interacts with ATP.

This sequence belongs to the ATPase alpha/beta chains family. In terms of assembly, F-type ATPases have 2 components, CF(1) - the catalytic core - and CF(0) - the membrane proton channel. CF(1) has five subunits: alpha(3), beta(3), gamma(1), delta(1), epsilon(1). CF(0) has four main subunits: a(1), b(1), b'(1) and c(9-12).

The protein resides in the plastid. It is found in the chloroplast thylakoid membrane. The catalysed reaction is ATP + H2O + 4 H(+)(in) = ADP + phosphate + 5 H(+)(out). Produces ATP from ADP in the presence of a proton gradient across the membrane. The catalytic sites are hosted primarily by the beta subunits. This is ATP synthase subunit beta, chloroplastic from Nandina domestica (Heavenly bamboo).